Here is a 341-residue protein sequence, read N- to C-terminus: C2 calcium-dependent domain-containing protein 4D (341 aa).

A compositionally biased stretch (basic and acidic residues) spans Arg-56–Pro-71. Disordered stretches follow at residues Arg-56–Asn-75 and Cys-134–Pro-176. Over residues Ser-139–Pro-149 the composition is skewed to low complexity. In terms of domain architecture, C2 spans Arg-205–Gly-331.

This is C2 calcium-dependent domain-containing protein 4D (C2cd4d) from Mus musculus (Mouse).